A 280-amino-acid chain; its full sequence is Large ribosomal subunit protein uL2 (280 aa).

Disordered regions lie at residues 33–55 and 199–266; these read LTEG…RRRG and DNSN…KASQ. A compositionally biased stretch (basic residues) spans 209 to 219; it reads GRMRHKGKRPS.

Belongs to the universal ribosomal protein uL2 family. As to quaternary structure, part of the 50S ribosomal subunit. Forms a bridge to the 30S subunit in the 70S ribosome.

In terms of biological role, one of the primary rRNA binding proteins. Required for association of the 30S and 50S subunits to form the 70S ribosome, for tRNA binding and peptide bond formation. It has been suggested to have peptidyltransferase activity; this is somewhat controversial. Makes several contacts with the 16S rRNA in the 70S ribosome. This is Large ribosomal subunit protein uL2 from Ruegeria sp. (strain TM1040) (Silicibacter sp.).